Consider the following 627-residue polypeptide: Pheromone B alpha 2 receptor (627 aa).

The Extracellular segment spans residues 1–7; the sequence is MLDPTYP. The chain crosses the membrane as a helical span at residues 8 to 28; that stretch reads AFPIFAFLGIVCCLVPLPWHL. The Cytoplasmic segment spans residues 29-35; sequence QSWNSGT. A helical transmembrane segment spans residues 36-56; that stretch reads CFLMIWTAVACLNMFVNSIIW. Over 57-69 the chain is Extracellular; sequence KDHAQNVAPVWCE. Residues 70 to 90 form a helical membrane-spanning segment; the sequence is ISIRITLGASVGIPASSLCIV. Topologically, residues 91 to 102 are cytoplasmic; the sequence is RRLYSIAKKFRA. The helical transmembrane segment at 103 to 123 threads the bilayer; the sequence is VMVDALICVLFPILYIILQIV. Topologically, residues 124 to 150 are extracellular; it reads VQGHRFNILENIGCFPAIINTPLTYPL. A helical transmembrane segment spans residues 151-171; sequence TFMWPVLIGVISFIYSTLALI. Over 172-197 the chain is Cytoplasmic; it reads QFNRHRLQFTQFLHSNSTLSVSRYLR. Residues 198–218 traverse the membrane as a helical segment; the sequence is LMALAMTEMMCTTPMGVFVII. Residues 219-260 are Extracellular-facing; sequence LNAKATPVSPYVSWAVTHYGYGRIDQVPAIIWRSNRLLVASY. The helical transmembrane segment at 261–281 threads the bilayer; the sequence is ELTRWSSPAIALIFFFYFGFA. The Cytoplasmic portion of the chain corresponds to 282-627; that stretch reads QEARRNYAAA…ASPRTHRASV (346 aa). 3 disordered regions span residues 363–405, 479–505, and 518–627; these read LPRP…SSPI, TVPQHNTADEPASPALPDTPSSCSSSA, and LPST…RASV. Residues 372 to 387 show a composition bias toward low complexity; that stretch reads SSSGFSSSDSTRFGSS. Polar residues-rich tracts occupy residues 519–533 and 545–555; these read PSTTDVTRGTGSLPT and SLSQLFGISSM. Positions 569-607 are enriched in low complexity; that stretch reads ATGTASPTTTAPAPASTTIAPASATMAPATTTTAPTTIA.

Belongs to the G-protein coupled receptor 4 family.

Its subcellular location is the cell membrane. Receptor for the BAP2 pheromone, a prenylated mating factor. The receptor/pheromone interaction may have a role in the fusion of clamp cells. This Schizophyllum commune (Split gill fungus) protein is Pheromone B alpha 2 receptor (BAR2).